A 264-amino-acid polypeptide reads, in one-letter code: MHSCWKMKLQNEKTLGHSVSRSSNISKAGSPTSVSAPSSFPRTSVTPSSQDICRICHCEGDDESPLITPCHCTGSLHFVHQACLQQWIKSSDTRCCELCKFEFIMETKLKPLRKWEKLQMTASERRKIMCSVTFHVIAITCVVWSLYVLIDRTAEEIKMGQNNGILEWPFWTKLVVVAIGFTGGLLFMYVQCKVYVQLWKRLKAYNRVIYVQNCPETCKKKIFEKSVIIEPNLESKEALGIHHSDTNSSYYTEPEDCGAAILQV.

The disordered stretch occupies residues 15-47 (LGHSVSRSSNISKAGSPTSVSAPSSFPRTSVTP). A compositionally biased stretch (polar residues) spans 17-47 (HSVSRSSNISKAGSPTSVSAPSSFPRTSVTP). The RING-CH-type zinc finger occupies 45–106 (VTPSSQDICR…ELCKFEFIME (62 aa)). Zn(2+) is bound by residues C53, C56, C70, C72, H80, C83, C96, and C99. A run of 2 helical transmembrane segments spans residues 130-150 (CSVT…YVLI) and 170-190 (FWTK…FMYV).

The protein localises to the cytoplasmic vesicle membrane. Its subcellular location is the lysosome membrane. It localises to the early endosome membrane. The catalysed reaction is S-ubiquitinyl-[E2 ubiquitin-conjugating enzyme]-L-cysteine + [acceptor protein]-L-lysine = [E2 ubiquitin-conjugating enzyme]-L-cysteine + N(6)-ubiquitinyl-[acceptor protein]-L-lysine.. It participates in protein modification; protein ubiquitination. E3 ubiquitin-protein ligase that mediates ubiquitination of cd86 and MHC class II proteins, such as hla-dr alpha and beta, and promotes their subsequent endocytosis and sorting to lysosomes via multivesicular bodies. This chain is E3 ubiquitin-protein ligase MARCHF8 (marchf8), found in Xenopus tropicalis (Western clawed frog).